We begin with the raw amino-acid sequence, 432 residues long: Glutamate-1-semialdehyde 2,1-aminomutase (432 aa).

Residue K270 is modified to N6-(pyridoxal phosphate)lysine.

It belongs to the class-III pyridoxal-phosphate-dependent aminotransferase family. HemL subfamily. In terms of assembly, homodimer. The cofactor is pyridoxal 5'-phosphate.

The protein resides in the cytoplasm. The catalysed reaction is (S)-4-amino-5-oxopentanoate = 5-aminolevulinate. Its pathway is porphyrin-containing compound metabolism; protoporphyrin-IX biosynthesis; 5-aminolevulinate from L-glutamyl-tRNA(Glu): step 2/2. The chain is Glutamate-1-semialdehyde 2,1-aminomutase from Acinetobacter baumannii (strain ATCC 17978 / DSM 105126 / CIP 53.77 / LMG 1025 / NCDC KC755 / 5377).